A 710-amino-acid polypeptide reads, in one-letter code: Polyribonucleotide nucleotidyltransferase (710 aa).

Mg(2+)-binding residues include D491 and D497. A KH domain is found at 559–618; sequence PRLITIKINPEKIRDVIGKGGAVIRALTEETGTQIDISDEGVVTIASVDAAAGQEAKRRI. One can recognise an S1 motif domain in the interval 628-696; sequence GKVYEGTVLK…DRGRLKLSMK (69 aa).

Belongs to the polyribonucleotide nucleotidyltransferase family. It depends on Mg(2+) as a cofactor.

It localises to the cytoplasm. It carries out the reaction RNA(n+1) + phosphate = RNA(n) + a ribonucleoside 5'-diphosphate. Involved in mRNA degradation. Catalyzes the phosphorolysis of single-stranded polyribonucleotides processively in the 3'- to 5'-direction. This chain is Polyribonucleotide nucleotidyltransferase, found in Herminiimonas arsenicoxydans.